The chain runs to 107 residues: NADH-quinone oxidoreductase subunit K 2 (107 aa).

The next 3 membrane-spanning stretches (helical) occupy residues 3–23 (LPIY…LWGA), 30–50 (VRIL…LITF), and 67–87 (ILTL…LAII).

This sequence belongs to the complex I subunit 4L family. NDH-1 is composed of 14 different subunits. Subunits NuoA, H, J, K, L, M, N constitute the membrane sector of the complex.

The protein resides in the cell membrane. The enzyme catalyses a quinone + NADH + 5 H(+)(in) = a quinol + NAD(+) + 4 H(+)(out). Functionally, NDH-1 shuttles electrons from NADH, via FMN and iron-sulfur (Fe-S) centers, to quinones in the respiratory chain. The immediate electron acceptor for the enzyme in this species is believed to be a menaquinone. Couples the redox reaction to proton translocation (for every two electrons transferred, four hydrogen ions are translocated across the cytoplasmic membrane), and thus conserves the redox energy in a proton gradient. This chain is NADH-quinone oxidoreductase subunit K 2, found in Symbiobacterium thermophilum (strain DSM 24528 / JCM 14929 / IAM 14863 / T).